Reading from the N-terminus, the 124-residue chain is Period circadian protein (124 aa).

The disordered stretch occupies residues 30-124 (TAPVELDPPK…TVTLTESLLN (95 aa)). The segment covering 71–96 (SGNFTTGSNVRMSSVTNTSNAGTGTS) has biased composition (low complexity). Positions 97–107 (SAGGNGNGGSG) are enriched in gly residues.

As to quaternary structure, forms a heterodimer with timeless (TIM); the complex then translocates into the nucleus. In terms of processing, phosphorylated with a circadian rhythmicity, probably by the double-time protein (dbt). Phosphorylation could be implicated in the stability of per monomer and in the formation of heterodimer per-tim.

It is found in the nucleus. The protein resides in the cytoplasm. Its subcellular location is the perinuclear region. Functionally, essential for biological clock functions. Determines the period length of circadian and ultradian rhythms; an increase in PER dosage leads to shortened circadian rhythms and a decrease leads to lengthened circadian rhythms. Essential for the circadian rhythmicity of locomotor activity, eclosion behavior, and for the rhythmic component of the male courtship song that originates in the thoracic nervous system. The biological cycle depends on the rhythmic formation and nuclear localization of the TIM-PER complex. Light induces the degradation of TIM, which promotes elimination of PER. Nuclear activity of the heterodimer coordinatively regulates PER and TIM transcription through a negative feedback loop. Behaves as a negative element in circadian transcriptional loop. Does not appear to bind DNA, suggesting indirect transcriptional inhibition. In Hirtodrosophila pictiventris (Fruit fly), this protein is Period circadian protein (per).